A 208-amino-acid polypeptide reads, in one-letter code: Thioredoxin domain-containing protein 9 (208 aa).

Residues 68–179 (YEEVADEKEF…MENRLARSEV (112 aa)) enclose the Thioredoxin domain.

In terms of tissue distribution, expressed throughout the body with high expression in the nervous system, including the ventral nerve cord and tail neurons, and vulva.

It localises to the nucleus. The protein localises to the cytoplasm. Functionally, required for normal microtubule organization and function. Regulates tubulin acetylation in ALM and PLM neurons. The sequence is that of Thioredoxin domain-containing protein 9 from Caenorhabditis elegans.